The primary structure comprises 172 residues: Large ribosomal subunit protein uL10 (172 aa).

The protein belongs to the universal ribosomal protein uL10 family. Part of the ribosomal stalk of the 50S ribosomal subunit. The N-terminus interacts with L11 and the large rRNA to form the base of the stalk. The C-terminus forms an elongated spine to which L12 dimers bind in a sequential fashion forming a multimeric L10(L12)X complex.

Functionally, forms part of the ribosomal stalk, playing a central role in the interaction of the ribosome with GTP-bound translation factors. The protein is Large ribosomal subunit protein uL10 (rplJ) of Brucella abortus biovar 1 (strain 9-941).